A 461-amino-acid chain; its full sequence is tRNA modification GTPase MnmE (461 aa).

(6S)-5-formyl-5,6,7,8-tetrahydrofolate-binding residues include arginine 23, glutamate 88, and arginine 127. A TrmE-type G domain is found at 223 to 383 (GLNTVIVGKP…LKECIKNLFF (161 aa)). Asparagine 233 provides a ligand contact to K(+). GTP contacts are provided by residues 233–238 (NVGKSS), 252–258 (TEIPGTT), and 277–280 (DTAG). Serine 237 lines the Mg(2+) pocket. Positions 252, 254, and 257 each coordinate K(+). Threonine 258 provides a ligand contact to Mg(2+). Position 461 (lysine 461) interacts with (6S)-5-formyl-5,6,7,8-tetrahydrofolate.

Belongs to the TRAFAC class TrmE-Era-EngA-EngB-Septin-like GTPase superfamily. TrmE GTPase family. Homodimer. Heterotetramer of two MnmE and two MnmG subunits. Requires K(+) as cofactor.

It is found in the cytoplasm. Its function is as follows. Exhibits a very high intrinsic GTPase hydrolysis rate. Involved in the addition of a carboxymethylaminomethyl (cmnm) group at the wobble position (U34) of certain tRNAs, forming tRNA-cmnm(5)s(2)U34. This is tRNA modification GTPase MnmE from Clostridium botulinum (strain Okra / Type B1).